We begin with the raw amino-acid sequence, 461 residues long: tRNA modification GTPase MnmE (461 aa).

Positions 32, 89, and 128 each coordinate (6S)-5-formyl-5,6,7,8-tetrahydrofolate. In terms of domain architecture, TrmE-type G spans 224–387 (GHALSIVGKP…LSQKISAFFP (164 aa)). Asparagine 234 contacts K(+). GTP contacts are provided by residues 234–239 (NAGKSS), 253–259 (SDIKGTT), and 278–281 (DTAG). Serine 238 is a binding site for Mg(2+). Residues serine 253, isoleucine 255, and threonine 258 each coordinate K(+). Residue threonine 259 coordinates Mg(2+). Lysine 461 lines the (6S)-5-formyl-5,6,7,8-tetrahydrofolate pocket.

It belongs to the TRAFAC class TrmE-Era-EngA-EngB-Septin-like GTPase superfamily. TrmE GTPase family. Homodimer. Heterotetramer of two MnmE and two MnmG subunits. K(+) is required as a cofactor.

The protein resides in the cytoplasm. Functionally, exhibits a very high intrinsic GTPase hydrolysis rate. Involved in the addition of a carboxymethylaminomethyl (cmnm) group at the wobble position (U34) of certain tRNAs, forming tRNA-cmnm(5)s(2)U34. This Helicobacter pylori (strain ATCC 700392 / 26695) (Campylobacter pylori) protein is tRNA modification GTPase MnmE.